Reading from the N-terminus, the 40-residue chain is Ribosome-inactivating protein saporin-1 (40 aa).

The protein belongs to the ribosome-inactivating protein family. Type 1 RIP subfamily.

It carries out the reaction Endohydrolysis of the N-glycosidic bond at one specific adenosine on the 28S rRNA.. Its function is as follows. Ribosome-inactivating protein of type 1, inhibits protein synthesis in animal cells. This chain is Ribosome-inactivating protein saporin-1 (SAP1), found in Saponaria officinalis (Common soapwort).